The sequence spans 187 residues: T-cell receptor-associated transmembrane adapter 1 (187 aa).

Over 1-7 the chain is Extracellular; sequence MSGSSGC. Residues 8 to 28 form a helical; Signal-anchor for type III membrane protein membrane-spanning segment; the sequence is PFFLWGLLAFLGLALVISLIF. Topologically, residues 29–187 are cytoplasmic; it reads NISHYVEKQR…LIRAKREPVI (159 aa). Position 46 is a phosphoserine (Ser46). Phosphotyrosine is present on Tyr80. The tract at residues 80–83 is interaction with PIK3R1; the sequence is YEQM. The tract at residues 117–138 is disordered; sequence SVKGKRRRPRKQNTNVSDRGKD.

As to quaternary structure, homodimer; disulfide-linked. Interacts with CD3Z. When phosphorylated, interacts with PIK3R1. In terms of processing, phosphorylated on tyrosines upon TCR activation. Present in T-cells (at protein level).

Its subcellular location is the cell membrane. In terms of biological role, stabilizes the TCR (T-cell antigen receptor)/CD3 complex at the surface of T-cells. The protein is T-cell receptor-associated transmembrane adapter 1 (Trat1) of Mus musculus (Mouse).